Here is a 91-residue protein sequence, read N- to C-terminus: Cell division topological specificity factor (91 aa).

The protein belongs to the MinE family.

Prevents the cell division inhibition by proteins MinC and MinD at internal division sites while permitting inhibition at polar sites. This ensures cell division at the proper site by restricting the formation of a division septum at the midpoint of the long axis of the cell. This Gloeobacter violaceus (strain ATCC 29082 / PCC 7421) protein is Cell division topological specificity factor.